The primary structure comprises 962 residues: Ubiquitin carboxyl-terminal hydrolase 4 (962 aa).

The 112-residue stretch at 11–122 folds into the DUSP domain; it reads PDVETQKTEL…GQQPIVRKVV (112 aa). Residues 27 to 216 form a necessary for interaction with SART3 region; the sequence is TLQRGAQWYL…LYQGQVLVIE (190 aa). Residues 133-141 carry the Nuclear export signal motif; the sequence is VEVYLLELK. A Ubiquitin-like 1 domain is found at 142–226; that stretch reads LCENSDPTNV…PQNEDGTWPR (85 aa). The interval 220–249 is disordered; it reads EDGTWPRQSLQSKSSTAPSRNFTTSSKPSA. The span at 225–249 shows a compositional bias: polar residues; sequence PRQSLQSKSSTAPSRNFTTSSKPSA. The segment at 229–295 is required for USP4 activation by providing conformational flexibility between the DUSP and catalytic domains; it reads LQSKSSTAPS…SYNCQEPPSP (67 aa). A USP domain is found at 302–922; the sequence is CGLGNLGNTC…AAYVLFYQRR (621 aa). Cysteine 311 serves as the catalytic Nucleophile. Residues 384–386 form a regulates ubiquitin dissociation region; the sequence is PQF. Positions 405–407 are necessary for interaction with RBL2; that stretch reads LHE. Serine 445 is modified (phosphoserine). A necessary for interaction with RB1 and RBL2 region spans residues 459 to 463; the sequence is LVCPE. The Zn(2+) site is built by cysteine 461 and cysteine 464. In terms of domain architecture, Ubiquitin-like 2 spans 483–571; it reads LKKDRIMEVF…IFVYEVCNTS (89 aa). Residues 485–774 are interacts with DUSP and ubiquitin-like 1 domains and is required for USP4 activation; that stretch reads KDRIMEVFLV…SQPQKKKKAA (290 aa). The tract at residues 638-699 is disordered; the sequence is EFLSSPLEPG…SESAQKVKGQ (62 aa). A Phosphoserine modification is found at serine 655. Positions 657–666 are enriched in acidic residues; that stretch reads EGDEEEEMDH. Residues serine 675 and serine 680 each carry the phosphoserine modification. The short motif at 766–771 is the Nuclear localization signal element; the sequence is QPQKKK. Residues cysteine 798 and cysteine 801 each coordinate Zn(2+). Histidine 880 acts as the Proton acceptor in catalysis. A compositionally biased stretch (low complexity) spans 928–937; it reads STSSLGSFPG. The disordered stretch occupies residues 928–962; it reads STSSLGSFPGSDGGVKLSSSHQGMGDEEAYNMDTN. Acidic residues predominate over residues 952–962; it reads GDEEAYNMDTN.

This sequence belongs to the peptidase C19 family. USP4 subfamily. In terms of assembly, interacts with RB1 (both dephosphorylated and hypophosphorylated forms). Interacts with RBL1 and RBL2. Interacts with ADORA2A (via cytoplasmic C-terminus); the interaction is direct. Interacts with SART3; recruits USP4 to its substrate PRPF3. Post-translationally, phosphorylated at Ser-445 by PKB/AKT1 in response to EGF stimulus, promoting its ability deubiquitinate RHEB. In terms of processing, monoubiquitinated by TRIM21. Ubiquitination does not lead to its proteasomal degradation. Autodeubiquitinated. Expressed in brain, kidney, liver and spleen (at protein level).

It is found in the cytoplasm. It localises to the nucleus. The enzyme catalyses Thiol-dependent hydrolysis of ester, thioester, amide, peptide and isopeptide bonds formed by the C-terminal Gly of ubiquitin (a 76-residue protein attached to proteins as an intracellular targeting signal).. Its activity is regulated as follows. The completion of the deubiquitinase reaction is mediated by the DUSP and ubiquitin-like 1 domains which promotes the release of ubiquitin from the catalytic site enabling subsequent reactions to occur. Its function is as follows. Deubiquitinating enzyme that removes conjugated ubiquitin from target proteins. Deubiquitinates PDPK1. Deubiquitinates TRIM21. Deubiquitinates receptor ADORA2A which increases the amount of functional receptor at the cell surface. Deubiquitinates HAS2. Deubiquitinates RHEB in response to EGF signaling, promoting mTORC1 signaling. May regulate mRNA splicing through deubiquitination of the U4 spliceosomal protein PRPF3. This may prevent its recognition by the U5 component PRPF8 thereby destabilizing interactions within the U4/U6.U5 snRNP. May also play a role in the regulation of quality control in the ER. The protein is Ubiquitin carboxyl-terminal hydrolase 4 (Usp4) of Mus musculus (Mouse).